The chain runs to 284 residues: Nucleotide-binding protein VF_0384 (284 aa).

8–15 (GSSGAGKS) provides a ligand contact to ATP. 56–59 (DIRN) provides a ligand contact to GTP.

This sequence belongs to the RapZ-like family.

Displays ATPase and GTPase activities. The chain is Nucleotide-binding protein VF_0384 from Aliivibrio fischeri (strain ATCC 700601 / ES114) (Vibrio fischeri).